The chain runs to 183 residues: Capsid protein (183 aa).

A disordered region spans residues 136–183; that stretch reads NAPILSTLPETTVVRRRGRSPRRRTPSPRRRRSQSPRRRRSQSRESQC. Over residues 149–176 the composition is skewed to basic residues; the sequence is VRRRGRSPRRRTPSPRRRRSQSPRRRRS. Serine 155, serine 162, and serine 170 each carry phosphoserine; by host. The stretch at 155–161 is one 1; half-length repeat; it reads SPRRRTP. Positions 155–177 are 3 X 8 AA repeats of S-P-R-R-R-[PR]-S-Q; that stretch reads SPRRRTPSPRRRRSQSPRRRRSQ. Residues 158–175 carry the Bipartite nuclear localization signal motif; it reads RRTPSPRRRRSQSPRRRR. 2 repeat units span residues 162 to 169 and 170 to 177. The segment at 177-183 is RNA binding; the sequence is QSRESQC.

It belongs to the orthohepadnavirus core antigen family. In terms of assembly, homodimerizes, then multimerizes. Interacts with cytosol exposed regions of viral L glycoprotein present in the reticulum-to-Golgi compartment. Interacts with human FLNB. Phosphorylated form interacts with host importin alpha; this interaction depends on the exposure of the NLS, which itself depends upon genome maturation and/or phosphorylation of the capsid protein. Interacts with host NUP153. In terms of processing, phosphorylated by host SRPK1, SRPK2, and maybe protein kinase C or GAPDH. Phosphorylation is critical for pregenomic RNA packaging. Protein kinase C phosphorylation is stimulated by HBx protein and may play a role in transport of the viral genome to the nucleus at the late step during the viral replication cycle.

The protein resides in the virion. The protein localises to the host cytoplasm. Self assembles to form an icosahedral capsid. Most capsids appear to be large particles with an icosahedral symmetry of T=4 and consist of 240 copies of capsid protein, though a fraction forms smaller T=3 particles consisting of 180 capsid proteins. Entering capsids are transported along microtubules to the nucleus. Phosphorylation of the capsid is thought to induce exposure of nuclear localization signal in the C-terminal portion of the capsid protein that allows binding to the nuclear pore complex via the importin (karyopherin-) alpha and beta. Capsids are imported in intact form through the nuclear pore into the nuclear basket, where it probably binds NUP153. Only capsids that contain the mature viral genome can release the viral DNA and capsid protein into the nucleoplasm. Immature capsids get stuck in the basket. Capsids encapsulate the pre-genomic RNA and the P protein. Pre-genomic RNA is reverse-transcribed into DNA while the capsid is still in the cytoplasm. The capsid can then either be directed to the nucleus, providing more genomes for transcription, or bud through the endoplasmic reticulum to provide new virions. In Homo sapiens (Human), this protein is Capsid protein.